We begin with the raw amino-acid sequence, 388 residues long: MNNPNIDSDELTALFTADTPLIDVRAPLEFILGSLPGSVNLPILNNEERALVGTTYKQQGSEAAVMLGHEMISGQAKQDRLQQWLDFIRQHPRTVLYCFRGGKRSQITQQWLKDAGVDRPLIIGGYKQARQFLINTIDRFSENHTLLVITGPTGSGKTQLIQEIRNSYPVLDIEALARHRGSAFGGMSLPQPTQIDFENQLAVNLLKLKQNYLFDPVVVEDESRHTGRVYLPASFFEHMRSSEIIWVDEPLNTRVDNIFGDYIVATPIGQAQQARRNTQPLSSATEIQEILCQQALLLFDKYASALQAISKKLGGVRFQEVSQDLENARSSFVNRNEIQSNKTWIEKLVRYYYDPLYLGSLQRRQVNPCFKGSRQAAIDYLRARKQHA.

The 124-residue stretch at 15 to 138 folds into the Rhodanese domain; sequence FTADTPLIDV…ARQFLINTID (124 aa). Residue Cys-98 is the S-selanylcysteine intermediate of the active site.

Belongs to the SelU family. In terms of assembly, monomer.

It catalyses the reaction 5-methylaminomethyl-2-thiouridine(34) in tRNA + selenophosphate + (2E)-geranyl diphosphate + H2O + H(+) = 5-methylaminomethyl-2-selenouridine(34) in tRNA + (2E)-thiogeraniol + phosphate + diphosphate. The catalysed reaction is 5-methylaminomethyl-2-thiouridine(34) in tRNA + (2E)-geranyl diphosphate = 5-methylaminomethyl-S-(2E)-geranyl-thiouridine(34) in tRNA + diphosphate. It carries out the reaction 5-methylaminomethyl-S-(2E)-geranyl-thiouridine(34) in tRNA + selenophosphate + H(+) = 5-methylaminomethyl-2-(Se-phospho)selenouridine(34) in tRNA + (2E)-thiogeraniol. The enzyme catalyses 5-methylaminomethyl-2-(Se-phospho)selenouridine(34) in tRNA + H2O = 5-methylaminomethyl-2-selenouridine(34) in tRNA + phosphate. Involved in the post-transcriptional modification of the uridine at the wobble position (U34) of tRNA(Lys), tRNA(Glu) and tRNA(Gln). Catalyzes the conversion of 2-thiouridine (S2U-RNA) to 2-selenouridine (Se2U-RNA). Acts in a two-step process involving geranylation of 2-thiouridine (S2U) to S-geranyl-2-thiouridine (geS2U) and subsequent selenation of the latter derivative to 2-selenouridine (Se2U) in the tRNA chain. The polypeptide is tRNA 2-selenouridine synthase (Nitrosomonas eutropha (strain DSM 101675 / C91 / Nm57)).